The primary structure comprises 485 residues: Aspartyl/glutamyl-tRNA(Asn/Gln) amidotransferase subunit B (485 aa).

The protein belongs to the GatB/GatE family. GatB subfamily. In terms of assembly, heterotrimer of A, B and C subunits.

It carries out the reaction L-glutamyl-tRNA(Gln) + L-glutamine + ATP + H2O = L-glutaminyl-tRNA(Gln) + L-glutamate + ADP + phosphate + H(+). It catalyses the reaction L-aspartyl-tRNA(Asn) + L-glutamine + ATP + H2O = L-asparaginyl-tRNA(Asn) + L-glutamate + ADP + phosphate + 2 H(+). In terms of biological role, allows the formation of correctly charged Asn-tRNA(Asn) or Gln-tRNA(Gln) through the transamidation of misacylated Asp-tRNA(Asn) or Glu-tRNA(Gln) in organisms which lack either or both of asparaginyl-tRNA or glutaminyl-tRNA synthetases. The reaction takes place in the presence of glutamine and ATP through an activated phospho-Asp-tRNA(Asn) or phospho-Glu-tRNA(Gln). This chain is Aspartyl/glutamyl-tRNA(Asn/Gln) amidotransferase subunit B, found in Borrelia hermsii (strain HS1 / DAH).